We begin with the raw amino-acid sequence, 92 residues long: Bombyxin A-7 (92 aa).

An N-terminal signal peptide occupies residues 1–19; sequence MKLLLAIALMLTIVMWVST. Residue Gln-20 is modified to Pyrrolidone carboxylic acid. 3 disulfides stabilise this stretch: Cys-29/Cys-79, Cys-41/Cys-92, and Cys-78/Cys-83. The propeptide at 50 to 70 is c peptide like; it reads SDAQYASYGSAWLMPYSEGRG.

Belongs to the insulin family. In terms of assembly, heterodimer of a B chain and an A chain linked by two disulfide bonds.

It is found in the secreted. Functionally, brain peptide responsible for activation of prothoracic glands to produce ecdysone in insects. This Bombyx mori (Silk moth) protein is Bombyxin A-7 (BBXA7).